The chain runs to 425 residues: UPF0597 protein VP2173 (425 aa).

Belongs to the UPF0597 family.

In Vibrio parahaemolyticus serotype O3:K6 (strain RIMD 2210633), this protein is UPF0597 protein VP2173.